The sequence spans 334 residues: GTPase Obg (334 aa).

One can recognise an Obg domain in the interval 1-159 (MRFVDEVVIK…KEVRLELNLL (159 aa)). Positions 160–331 (ADVALLGLPN…LAKKLNEFLQ (172 aa)) constitute an OBG-type G domain. GTP is bound by residues 166–173 (GLPNAGKS), 191–195 (FTTMY), 212–215 (DIPG), 282–285 (NKID), and 312–314 (SAA). Residues Ser173 and Thr193 each coordinate Mg(2+).

It belongs to the TRAFAC class OBG-HflX-like GTPase superfamily. OBG GTPase family. As to quaternary structure, monomer. Requires Mg(2+) as cofactor.

It is found in the cytoplasm. An essential GTPase which binds GTP, GDP and possibly (p)ppGpp with moderate affinity, with high nucleotide exchange rates and a fairly low GTP hydrolysis rate. Plays a role in control of the cell cycle, stress response, ribosome biogenesis and in those bacteria that undergo differentiation, in morphogenesis control. This Francisella tularensis subsp. holarctica (strain FTNF002-00 / FTA) protein is GTPase Obg.